The sequence spans 232 residues: MDKAQQDALKKAAGIEAAKLVENGMIAGLGTGSTVKFLVDELGRRHQEEGLEFTGVTTSRRTQAQAESYGIKIVDIDDVDHIDVTIDGADEVDKNFNGIKGGGAALLWEKIVATNSNQIVWIVDESKVVDTIGKFPLPVEVIPFGAGHVIKKFEACGYKPVLRLDADGKEVRTDENNFVVDLHLERIDHPQELAEDLINTVGVVEHGLFLNMVDKVIVGDPNGPRVMTNANK.

Substrate-binding positions include Thr31–Thr34, Asp87–Asp90, and Lys100–Gly103. The Proton acceptor role is filled by Glu109. Lys127 is a binding site for substrate.

Belongs to the ribose 5-phosphate isomerase family. As to quaternary structure, homodimer.

The catalysed reaction is aldehydo-D-ribose 5-phosphate = D-ribulose 5-phosphate. The protein operates within carbohydrate degradation; pentose phosphate pathway; D-ribose 5-phosphate from D-ribulose 5-phosphate (non-oxidative stage): step 1/1. Functionally, catalyzes the reversible conversion of ribose-5-phosphate to ribulose 5-phosphate. The polypeptide is Ribose-5-phosphate isomerase A (Bifidobacterium longum subsp. infantis (strain ATCC 15697 / DSM 20088 / JCM 1222 / NCTC 11817 / S12)).